We begin with the raw amino-acid sequence, 877 residues long: Probable alpha/beta-glucosidase agdC (877 aa).

Residues 1 to 14 form the signal peptide; that stretch reads MLGSLLLLAPLAGA. 3 N-linked (GlcNAc...) asparagine glycosylation sites follow: asparagine 171, asparagine 293, and asparagine 373. Residue aspartate 422 is the Nucleophile of the active site. Residue glutamate 425 is part of the active site. The segment at 432-476 is disordered; sequence DPCTDPERYSSENNLPPAPPPVRSSSPRPLPGFPADFQPSSASRS. Over residues 447 to 463 the composition is skewed to pro residues; that stretch reads PPAPPPVRSSSPRPLPG. Asparagine 508 is a glycosylation site (N-linked (GlcNAc...) asparagine). Aspartate 573 functions as the Proton donor in the catalytic mechanism. Residues asparagine 574, asparagine 610, and asparagine 744 are each glycosylated (N-linked (GlcNAc...) asparagine).

Belongs to the glycosyl hydrolase 31 family.

It is found in the secreted. It catalyses the reaction Hydrolysis of terminal, non-reducing (1-&gt;4)-linked alpha-D-glucose residues with release of alpha-D-glucose.. It carries out the reaction Hydrolysis of terminal, non-reducing beta-D-glucosyl residues with release of beta-D-glucose.. Functionally, glucosidase involved in the degradation of cellulosic biomass. Has both alpha- and beta-glucosidase activity. The chain is Probable alpha/beta-glucosidase agdC (agdC) from Aspergillus oryzae (strain ATCC 42149 / RIB 40) (Yellow koji mold).